The primary structure comprises 313 residues: Adhesin MafA 2/3 (313 aa).

The signal sequence occupies residues 1–14 (MKTLLLLIPLVLTA). The N-palmitoyl cysteine moiety is linked to residue C15. C15 carries S-diacylglycerol cysteine lipidation. Positions 282–298 (GDTTAQNRPDFKQNNGK) are enriched in polar residues. The interval 282 to 313 (GDTTAQNRPDFKQNNGKNPDVGNEVIRRRKGG) is disordered.

The protein belongs to the MafA family.

The protein localises to the cell outer membrane. The polypeptide is Adhesin MafA 2/3 (mafA2) (Neisseria gonorrhoeae (strain ATCC 700825 / FA 1090)).